The chain runs to 118 residues: Transcriptional regulator WhiB4 (118 aa).

A 4Fe-4S Wbl-type domain is found at 36–92 (LCRTTDPDELFVRGAAQRKAAVICRHCPVMQECAADALDNKVEFGVWGGMTERQRRA). [4Fe-4S] cluster contacts are provided by Cys37, Cys59, Cys62, and Cys68. 2 disulfide bridges follow: Cys37/Cys68 and Cys59/Cys62.

It belongs to the WhiB family. [4Fe-4S] cluster is required as a cofactor. In terms of processing, the Fe-S cluster can be nitrosylated by nitric oxide (NO). Post-translationally, upon Fe-S cluster removal intramolecular disulfide bonds are formed.

It localises to the cytoplasm. In terms of biological role, acts as a transcriptional regulator. Probably redox-responsive. The apo- but not holo-form probably binds DNA. The polypeptide is Transcriptional regulator WhiB4 (whiB4) (Mycobacterium tuberculosis (strain CDC 1551 / Oshkosh)).